The sequence spans 369 residues: Caffeine synthase 1 (369 aa).

Residue Tyr24 participates in S-adenosyl-L-homocysteine binding. Thr31 contributes to the caffeine binding site. Residues Cys66, Asn71, Asp103, Leu104, Ser138, and Phe139 each coordinate S-adenosyl-L-homocysteine. Tyr156, His159, and Trp160 together coordinate caffeine. Asn177 contacts Mg(2+). Arg225 contributes to the caffeine binding site. Positions 263, 265, and 266 each coordinate Mg(2+). Phe321 is a binding site for caffeine.

It belongs to the methyltransferase superfamily. Type-7 methyltransferase family. It depends on Mg(2+) as a cofactor.

It carries out the reaction theobromine + S-adenosyl-L-methionine = caffeine + S-adenosyl-L-homocysteine + H(+). The enzyme catalyses 7-methylxanthine + S-adenosyl-L-methionine = theobromine + S-adenosyl-L-homocysteine + H(+). The protein operates within alkaloid biosynthesis. In terms of biological role, involved in the biosynthesis of caffeine. Catalyzes the conversion of 7-methylxanthine (7mX) to theobromine and of theobromine to caffeine. The polypeptide is Caffeine synthase 1 (Camellia taliensis (Wild tea)).